The chain runs to 808 residues: DNA gyrase subunit B (808 aa).

The Toprim domain maps to 429 to 544 (SELFIVEGDS…KGYLYIAQPP (116 aa)). Positions 435, 509, and 511 each coordinate Mg(2+).

The protein belongs to the type II topoisomerase GyrB family. As to quaternary structure, heterotetramer, composed of two GyrA and two GyrB chains. In the heterotetramer, GyrA contains the active site tyrosine that forms a transient covalent intermediate with DNA, while GyrB binds cofactors and catalyzes ATP hydrolysis. Mg(2+) serves as cofactor. The cofactor is Mn(2+). Requires Ca(2+) as cofactor.

It localises to the cytoplasm. The enzyme catalyses ATP-dependent breakage, passage and rejoining of double-stranded DNA.. Its function is as follows. A type II topoisomerase that negatively supercoils closed circular double-stranded (ds) DNA in an ATP-dependent manner to modulate DNA topology and maintain chromosomes in an underwound state. Negative supercoiling favors strand separation, and DNA replication, transcription, recombination and repair, all of which involve strand separation. Also able to catalyze the interconversion of other topological isomers of dsDNA rings, including catenanes and knotted rings. Type II topoisomerases break and join 2 DNA strands simultaneously in an ATP-dependent manner. This Rickettsia bellii (strain RML369-C) protein is DNA gyrase subunit B.